A 590-amino-acid chain; its full sequence is Leucine-rich repeat transmembrane neuronal protein 4 (590 aa).

The signal sequence occupies residues 1-30 (MGFHLITQLKGMSVVLVLLPTLLLVMLTGA). The 31-residue stretch at 31–61 (QRACPKNCRCDGKIVYCESHAFADIPENISG) folds into the LRRNT domain. The Extracellular segment spans residues 31 to 424 (QRACPKNCRC…QEYEHVSFHK (394 aa)). An N-linked (GlcNAc...) asparagine glycan is attached at N58. LRR repeat units lie at residues 62-83 (GSQG…QFAG), 86-107 (QLIW…AFQG), 110-131 (RLKE…TFHP), 134-155 (NLRN…QFKG), 158-179 (KLII…VFQD), 182-203 (NLDF…AFAG), 206-226 (KLKE…AHFP), 230-251 (NLRS…LTWT), 254-275 (SLHN…TFKC), and 278-299 (NLQK…TVNA). N126 carries an N-linked (GlcNAc...) asparagine glycan. N291 carries an N-linked (GlcNAc...) asparagine glycan. Positions 311 to 362 (NMWECSRSICPLFYWLKNFKGNKESTMICAGPKHIQGEKVSDAVETYNICSE) constitute an LRRCT domain. The helical transmembrane segment at 425–445 (IIAGSVALFLSVAMILLVIYV) threads the bilayer. Topologically, residues 446–590 (SWKRYPASMK…PAIYLERIAN (145 aa)) are cytoplasmic.

It belongs to the LRRTM family. Peripherally associated with AMPAR complex. AMPAR complex consists of an inner core made of 4 pore-forming GluA/GRIA proteins (GRIA1, GRIA2, GRIA3 and GRIA4) and 4 major auxiliary subunits arranged in a twofold symmetry. One of the two pairs of distinct binding sites is occupied either by CNIH2, CNIH3 or CACNG2, CACNG3. The other harbors CACNG2, CACNG3, CACNG4, CACNG8 or GSG1L. This inner core of AMPAR complex is complemented by outer core constituents binding directly to the GluA/GRIA proteins at sites distinct from the interaction sites of the inner core constituents. Outer core constituents include at least PRRT1, PRRT2, CKAMP44/SHISA9, FRRS1L and NRN1. The proteins of the inner and outer core serve as a platform for other, more peripherally associated AMPAR constituents, including LRRTM4. Alone or in combination, these auxiliary subunits control the gating and pharmacology of the AMPAR complex and profoundly impact their biogenesis and protein processing. Expressed in neuronal tissues.

It is found in the cell membrane. It localises to the postsynaptic cell membrane. Its function is as follows. May play a role in the development and maintenance of the vertebrate nervous system. Exhibits strong synaptogenic activity, restricted to excitatory presynaptic differentiation. This is Leucine-rich repeat transmembrane neuronal protein 4 (LRRTM4) from Homo sapiens (Human).